The following is a 148-amino-acid chain: 3-dehydroquinate dehydratase (148 aa).

The active-site Proton acceptor is tyrosine 26. Positions 77, 83, and 90 each coordinate substrate. Residue histidine 103 is the Proton donor of the active site. Substrate is bound by residues 104 to 105 (LS) and arginine 114.

This sequence belongs to the type-II 3-dehydroquinase family. As to quaternary structure, homododecamer.

The enzyme catalyses 3-dehydroquinate = 3-dehydroshikimate + H2O. It participates in metabolic intermediate biosynthesis; chorismate biosynthesis; chorismate from D-erythrose 4-phosphate and phosphoenolpyruvate: step 3/7. Functionally, catalyzes a trans-dehydration via an enolate intermediate. This is 3-dehydroquinate dehydratase from Chlorobaculum tepidum (strain ATCC 49652 / DSM 12025 / NBRC 103806 / TLS) (Chlorobium tepidum).